Here is a 302-residue protein sequence, read N- to C-terminus: Rab effector Noc2 (302 aa).

The region spanning 41–158 is the RabBD domain; that stretch reads QRRTQCLSPG…KRSGAWFYKG (118 aa). An FYVE-type zinc finger spans residues 89–146; sequence GNGVSQCLLCGEMLGFLGSSSVFCKDCRKKVCTKCGIEASPGQKRPLWLCKICSEQRE. Residues Cys-95, Cys-98, Cys-112, Cys-115, Cys-120, Cys-123, Cys-138, and Cys-141 each coordinate Zn(2+). 2 disordered regions span residues 174-194 and 206-302; these read DPHF…SAEV and VSSD…TTHY. Phosphoserine is present on Ser-248. Low complexity predominate over residues 258–269; sequence SHLSGSQSSLGS.

Recruited to dense-core vesicles through specific interaction with RAB27A in endocrine cells. Interacts with RAB3A, RAB3B, RAB3C and RAB3D. Interacts with ZYX. As to expression, highly expressed in pancreatic islets and parotid. High to moderate expression in adrenal gland, pituitary gland and ovary.

It is found in the cytoplasm. Its subcellular location is the cytoplasmic vesicle. It localises to the secretory vesicle membrane. Rab GTPase effector involved in the late steps of regulated exocytosis, both in endocrine and exocrine cells. Regulates the exocytosis of dense-core vesicles in neuroendocrine cells through interaction with RAB27A. Acts as a potential RAB3B effector protein in epithelial cells. The protein is Rab effector Noc2 (Rph3al) of Rattus norvegicus (Rat).